The following is a 507-amino-acid chain: Glycerol kinase (507 aa).

Residue threonine 13 coordinates ADP. ATP-binding residues include threonine 13, threonine 14, and serine 15. Threonine 13 serves as a coordination point for sn-glycerol 3-phosphate. Arginine 17 contributes to the ADP binding site. 4 residues coordinate sn-glycerol 3-phosphate: arginine 83, glutamate 84, tyrosine 135, and aspartate 245. Residues arginine 83, glutamate 84, tyrosine 135, aspartate 245, and glutamine 246 each contribute to the glycerol site. Residues threonine 267 and glycine 310 each contribute to the ADP site. Threonine 267, glycine 310, glutamine 314, and glycine 411 together coordinate ATP. ADP-binding residues include glycine 411 and asparagine 415.

The protein belongs to the FGGY kinase family.

It catalyses the reaction glycerol + ATP = sn-glycerol 3-phosphate + ADP + H(+). It functions in the pathway polyol metabolism; glycerol degradation via glycerol kinase pathway; sn-glycerol 3-phosphate from glycerol: step 1/1. Its activity is regulated as follows. Inhibited by fructose 1,6-bisphosphate (FBP). Its function is as follows. Key enzyme in the regulation of glycerol uptake and metabolism. Catalyzes the phosphorylation of glycerol to yield sn-glycerol 3-phosphate. This Halorhodospira halophila (strain DSM 244 / SL1) (Ectothiorhodospira halophila (strain DSM 244 / SL1)) protein is Glycerol kinase.